We begin with the raw amino-acid sequence, 92 residues long: PqqA binding protein (92 aa).

It belongs to the PqqD family. Monomer. Interacts with PqqE.

It participates in cofactor biosynthesis; pyrroloquinoline quinone biosynthesis. Functionally, functions as a PqqA binding protein and presents PqqA to PqqE, in the pyrroloquinoline quinone (PQQ) biosynthetic pathway. This Azotobacter vinelandii (strain DJ / ATCC BAA-1303) protein is PqqA binding protein.